The sequence spans 240 residues: Ribonuclease 3 (240 aa).

Residues 4–134 (SRQPLLDALG…LLGAIYLQHG (131 aa)) form the RNase III domain. Glutamate 44 is a Mg(2+) binding site. Residue aspartate 48 is part of the active site. Positions 120 and 123 each coordinate Mg(2+). The active site involves glutamate 123. In terms of domain architecture, DRBM spans 161-229 (DWKTSLQELT…AAAAWKALEV (69 aa)).

It belongs to the ribonuclease III family. In terms of assembly, homodimer. Requires Mg(2+) as cofactor.

It is found in the cytoplasm. It catalyses the reaction Endonucleolytic cleavage to 5'-phosphomonoester.. Its function is as follows. Digests double-stranded RNA. Involved in the processing of primary rRNA transcript to yield the immediate precursors to the large and small rRNAs (23S and 16S). Processes some mRNAs, and tRNAs when they are encoded in the rRNA operon. Processes pre-crRNA and tracrRNA of type II CRISPR loci if present in the organism. The protein is Ribonuclease 3 of Mycobacterium bovis (strain ATCC BAA-935 / AF2122/97).